We begin with the raw amino-acid sequence, 212 residues long: MSRYRGPRLKIIRRLNTPLPGLTSSPIVNSTVNTKSQRKDKSEYRIRLEEKQKLRFHYGITERQLLRYVRLARRAKGSTGQVLLQLLEMRLDNIIFRLGMAPTIPAARQLVNHGHVLVNERVVDIPSFRCKPQENISIRDRARSRALVDKNLNNSQESKKLSPSRDFLSKVPTHLRINTKNYKASVNQVVNRNSIGVKVNELLVVEYYSRQA.

The 64-residue stretch at 89–152 (MRLDNIIFRL…RSRALVDKNL (64 aa)) folds into the S4 RNA-binding domain.

This sequence belongs to the universal ribosomal protein uS4 family. As to quaternary structure, part of the 30S ribosomal subunit. Contacts protein S5. The interaction surface between S4 and S5 is involved in control of translational fidelity.

Its subcellular location is the plastid. It is found in the chloroplast. Functionally, one of the primary rRNA binding proteins, it binds directly to 16S rRNA where it nucleates assembly of the body of the 30S subunit. Its function is as follows. With S5 and S12 plays an important role in translational accuracy. The sequence is that of Small ribosomal subunit protein uS4c (rps4) from Staurastrum punctulatum (Green alga).